The sequence spans 194 residues: 7-methyl-GTP pyrophosphatase (194 aa).

Asp70 serves as the catalytic Proton acceptor.

Belongs to the Maf family. YceF subfamily. The cofactor is a divalent metal cation.

It localises to the cytoplasm. It catalyses the reaction N(7)-methyl-GTP + H2O = N(7)-methyl-GMP + diphosphate + H(+). Its function is as follows. Nucleoside triphosphate pyrophosphatase that hydrolyzes 7-methyl-GTP (m(7)GTP). May have a dual role in cell division arrest and in preventing the incorporation of modified nucleotides into cellular nucleic acids. The protein is 7-methyl-GTP pyrophosphatase of Vibrio vulnificus (strain YJ016).